Reading from the N-terminus, the 288-residue chain is 2-hydroxy-6-oxononadienedioate/2-hydroxy-6-oxononatrienedioate hydrolase (288 aa).

Positions 39–274 constitute an AB hydrolase-1 domain; that stretch reads LVLLHGSGPG…RCGHWAQWEH (236 aa). Histidine 268 serves as the catalytic Proton acceptor.

Belongs to the AB hydrolase superfamily. MhpC family. Homodimer.

The catalysed reaction is (2Z,4E)-2-hydroxy-6-oxonona-2,4-dienedioate + H2O = (2Z)-2-hydroxypenta-2,4-dienoate + succinate + H(+). It carries out the reaction (2Z,4E,7E)-2-hydroxy-6-oxonona-2,4,7-trienedioate + H2O = (2Z)-2-hydroxypenta-2,4-dienoate + fumarate + H(+). The protein operates within aromatic compound metabolism; 3-phenylpropanoate degradation. Catalyzes the cleavage of the C5-C6 bond of 2-hydroxy-6-oxononadienedioate and 2-hydroxy-6-oxononatrienedioate, a dienol ring fission product of the bacterial meta-cleavage pathway for degradation of phenylpropionic acid. The protein is 2-hydroxy-6-oxononadienedioate/2-hydroxy-6-oxononatrienedioate hydrolase of Paraburkholderia phymatum (strain DSM 17167 / CIP 108236 / LMG 21445 / STM815) (Burkholderia phymatum).